Consider the following 459-residue polypeptide: Chromosomal replication initiator protein DnaA (459 aa).

The interval 1–74 (MQKIETFWYF…DEMAQGHFNE (74 aa)) is domain I, interacts with DnaA modulators. Residues 74-122 (EKIHFKLELKDPAEIKTATIKAPEPKSKEDKKPPTDKAHGTTARKTNPS) are domain II. Residues 91–123 (ATIKAPEPKSKEDKKPPTDKAHGTTARKTNPSR) are disordered. Residues 96–112 (PEPKSKEDKKPPTDKAH) show a composition bias toward basic and acidic residues. Residues 123 to 339 (RLNPAFTFDA…GALKRVLAYS (217 aa)) form a domain III, AAA+ region region. Positions 167, 169, 170, and 171 each coordinate ATP. The segment at 340–459 (RFTGHPISLD…YSTLIHILRG (120 aa)) is domain IV, binds dsDNA.

The protein belongs to the DnaA family. Oligomerizes as a right-handed, spiral filament on DNA at oriC.

It is found in the cytoplasm. Plays an essential role in the initiation and regulation of chromosomal replication. ATP-DnaA binds to the origin of replication (oriC) to initiate formation of the DNA replication initiation complex once per cell cycle. Binds the DnaA box (a 9 base pair repeat at the origin) and separates the double-stranded (ds)DNA. Forms a right-handed helical filament on oriC DNA; dsDNA binds to the exterior of the filament while single-stranded (ss)DNA is stabiized in the filament's interior. The ATP-DnaA-oriC complex binds and stabilizes one strand of the AT-rich DNA unwinding element (DUE), permitting loading of DNA polymerase. After initiation quickly degrades to an ADP-DnaA complex that is not apt for DNA replication. Binds acidic phospholipids. The protein is Chromosomal replication initiator protein DnaA of Nitrosomonas eutropha (strain DSM 101675 / C91 / Nm57).